Reading from the N-terminus, the 746-residue chain is Bud site selection protein 7 (746 aa).

The segment at 733–746 (LNFFTTCTIGCYDA) is CHS5-binding.

It belongs to the CHAPS family. As to quaternary structure, component of the CHS5/6 complex composed of the 4 CHAPS proteins BCH1, BCH2v, BUD7, and CHS6 as well as at least CHS5 and GTP-bound ARF1. The complex interacts with the cargo protein CHS3.

The protein resides in the golgi apparatus. The protein localises to the trans-Golgi network membrane. In terms of biological role, member of the CHS5-ARF1P-binding proteins (CHAPS) which mediates export of specific cargo proteins, including chitin synthase CHS3. May be involved in positioning the proximal bud pole signal. This chain is Bud site selection protein 7 (BUD7), found in Saccharomyces cerevisiae (strain ATCC 204508 / S288c) (Baker's yeast).